The sequence spans 120 residues: Prefoldin subunit beta (120 aa).

The protein belongs to the prefoldin subunit beta family. Heterohexamer of two alpha and four beta subunits.

It is found in the cytoplasm. Functionally, molecular chaperone capable of stabilizing a range of proteins. Seems to fulfill an ATP-independent, HSP70-like function in archaeal de novo protein folding. The protein is Prefoldin subunit beta of Methanothrix thermoacetophila (strain DSM 6194 / JCM 14653 / NBRC 101360 / PT) (Methanosaeta thermophila).